The chain runs to 539 residues: Hydroxylamine reductase (539 aa).

[4Fe-4S] cluster contacts are provided by Cys-3, Cys-6, Cys-13, and Cys-19. His-240, Glu-264, Cys-308, Cys-395, Cys-423, Cys-448, Glu-482, and Lys-484 together coordinate hybrid [4Fe-2O-2S] cluster. At Cys-395 the chain carries Cysteine persulfide.

This sequence belongs to the HCP family. The cofactor is [4Fe-4S] cluster. It depends on hybrid [4Fe-2O-2S] cluster as a cofactor.

It localises to the cytoplasm. It catalyses the reaction A + NH4(+) + H2O = hydroxylamine + AH2 + H(+). Catalyzes the reduction of hydroxylamine to form NH(3) and H(2)O. This chain is Hydroxylamine reductase, found in Thermodesulfovibrio yellowstonii (strain ATCC 51303 / DSM 11347 / YP87).